A 336-amino-acid polypeptide reads, in one-letter code: Ultraviolet-sensitive opsin (336 aa).

At 1 to 29 (MDAWTYQFGNLSKISPFEGPQYHLAPKWA) the chain is on the extracellular side. Asparagine 10 is a glycosylation site (N-linked (GlcNAc...) asparagine). Residues 30-54 (FYLQAAFMGFVFFVGTPLNAIVLFV) traverse the membrane as a helical segment. Topologically, residues 55-66 (TMKYKKLRQPLN) are cytoplasmic. A helical membrane pass occupies residues 67-91 (YILVNISLGGFIFDTFSVSQVFFSA). Residues 92-106 (LRGYYFFGYTLCAME) lie on the Extracellular side of the membrane. A disulfide bridge connects residues cysteine 103 and cysteine 180. The chain crosses the membrane as a helical span at residues 107-126 (AAMGSIAGLVTGWSLAVLAF). The Cytoplasmic portion of the chain corresponds to 127 to 145 (ERYVVICKPFGSFKFGQSQ). A helical transmembrane segment spans residues 146–169 (ALGAVALTWIIGIGCATPPFWGWS). The Extracellular portion of the chain corresponds to 170 to 195 (RYIPEGIGTACGPDWYTKNEEYNTES). The chain crosses the membrane as a helical span at residues 196–223 (YTYFLLVSCFMMPIMIITFSYSQLLGAL). Residues 224–245 (RAVAAQQAESASTQKAEKEVSR) are Cytoplasmic-facing. A helical transmembrane segment spans residues 246–269 (MVVVMVGSFVVCYGPYAITALYFS). Residues 270-277 (YAEDSNKD) are Extracellular-facing. Residues 278–302 (YRLVAIPSLFSKSSCVYNPLIYAFM) form a helical membrane-spanning segment. An N6-(retinylidene)lysine modification is found at lysine 289. Residues 303–336 (NKQFNACIMETVFGKKIDESSEVSSKTETSSVSA) are Cytoplasmic-facing.

It belongs to the G-protein coupled receptor 1 family. Opsin subfamily. In terms of processing, phosphorylated on some or all of the serine and threonine residues present in the C-terminal region.

The protein resides in the membrane. Its function is as follows. Visual pigments are the light-absorbing molecules that mediate vision. They consist of an apoprotein, opsin, covalently linked to cis-retinal. This Carassius auratus (Goldfish) protein is Ultraviolet-sensitive opsin.